Here is a 436-residue protein sequence, read N- to C-terminus: Arginine-hydroxylase NDUFAF5, mitochondrial (436 aa).

The transit peptide at Met1 to Tyr25 directs the protein to the mitochondrion. Residues Val365–Lys436 form a disordered region. Positions Gln369–Gln380 are enriched in low complexity. Composition is skewed to basic and acidic residues over residues Pro391–Lys411 and Gln421–Lys436.

It belongs to the methyltransferase superfamily.

It is found in the mitochondrion. Functionally, involved in the assembly of mitochondrial NADH:ubiquinone oxidoreductase complex (complex I, MT-ND1) at early stages. Probably acts as an arginine hydroxylase. May also have methyltransferase activity. The chain is Arginine-hydroxylase NDUFAF5, mitochondrial from Dictyostelium discoideum (Social amoeba).